A 169-amino-acid polypeptide reads, in one-letter code: S-ribosylhomocysteine lyase (169 aa).

The Fe cation site is built by H54, H58, and C128.

This sequence belongs to the LuxS family. As to quaternary structure, homodimer. It depends on Fe cation as a cofactor.

The enzyme catalyses S-(5-deoxy-D-ribos-5-yl)-L-homocysteine = (S)-4,5-dihydroxypentane-2,3-dione + L-homocysteine. Its function is as follows. Involved in the synthesis of autoinducer 2 (AI-2) which is secreted by bacteria and is used to communicate both the cell density and the metabolic potential of the environment. The regulation of gene expression in response to changes in cell density is called quorum sensing. Catalyzes the transformation of S-ribosylhomocysteine (RHC) to homocysteine (HC) and 4,5-dihydroxy-2,3-pentadione (DPD). This Shewanella loihica (strain ATCC BAA-1088 / PV-4) protein is S-ribosylhomocysteine lyase.